The chain runs to 258 residues: Acetylglutamate kinase (258 aa).

Substrate is bound by residues 44–45 (GG), Arg66, and Asn158. Residues 181–186 (DVSGIL) and 209–211 (IIT) each bind ATP.

It belongs to the acetylglutamate kinase family. ArgB subfamily. In terms of assembly, homodimer.

Its subcellular location is the cytoplasm. The enzyme catalyses N-acetyl-L-glutamate + ATP = N-acetyl-L-glutamyl 5-phosphate + ADP. The protein operates within amino-acid biosynthesis; L-arginine biosynthesis; N(2)-acetyl-L-ornithine from L-glutamate: step 2/4. Its function is as follows. Catalyzes the ATP-dependent phosphorylation of N-acetyl-L-glutamate. The sequence is that of Acetylglutamate kinase from Escherichia coli O157:H7.